Consider the following 173-residue polypeptide: ATP synthase subunit b (173 aa).

The helical transmembrane segment at leucine 15 to alanine 35 threads the bilayer.

The protein belongs to the ATPase B chain family. F-type ATPases have 2 components, F(1) - the catalytic core - and F(0) - the membrane proton channel. F(1) has five subunits: alpha(3), beta(3), gamma(1), delta(1), epsilon(1). F(0) has three main subunits: a(1), b(2) and c(10-14). The alpha and beta chains form an alternating ring which encloses part of the gamma chain. F(1) is attached to F(0) by a central stalk formed by the gamma and epsilon chains, while a peripheral stalk is formed by the delta and b chains.

It is found in the cell membrane. Functionally, f(1)F(0) ATP synthase produces ATP from ADP in the presence of a proton or sodium gradient. F-type ATPases consist of two structural domains, F(1) containing the extramembraneous catalytic core and F(0) containing the membrane proton channel, linked together by a central stalk and a peripheral stalk. During catalysis, ATP synthesis in the catalytic domain of F(1) is coupled via a rotary mechanism of the central stalk subunits to proton translocation. Its function is as follows. Component of the F(0) channel, it forms part of the peripheral stalk, linking F(1) to F(0). This Pediococcus pentosaceus (strain ATCC 25745 / CCUG 21536 / LMG 10740 / 183-1w) protein is ATP synthase subunit b.